The sequence spans 553 residues: HTH-type transcriptional regulator SgrR (553 aa).

The HTH marR-type domain maps to methionine 1–glutamine 117. A DNA-binding region (H-T-H motif) is located at residues leucine 26–glutamine 49. Positions glutamate 163–tryptophan 494 are solute-binding.

Activates the small RNA gene sgrS under glucose-phosphate stress conditions as well as yfdZ. Represses its own transcription under both stress and non-stress conditions. Might act as a sensor of the intracellular accumulation of phosphoglucose by binding these molecules in its C-terminal solute-binding domain. This is HTH-type transcriptional regulator SgrR from Yersinia enterocolitica serotype O:8 / biotype 1B (strain NCTC 13174 / 8081).